Reading from the N-terminus, the 92-residue chain is Small ribosomal subunit protein bS20 (92 aa).

Residues 1-20 are disordered; the sequence is MANIASAKKRARQAENNRAH.

This sequence belongs to the bacterial ribosomal protein bS20 family.

Functionally, binds directly to 16S ribosomal RNA. The polypeptide is Small ribosomal subunit protein bS20 (Methylococcus capsulatus (strain ATCC 33009 / NCIMB 11132 / Bath)).